The sequence spans 122 residues: Protein SPIRAL1-like 3 (122 aa).

Disordered regions lie at residues 1–78 and 96–122; these read MGKA…NNYF and KVHA…SGNK. The segment covering 32-61 has biased composition (low complexity); that stretch reads TMGTTTTTTTTTTTDGTGGRPITTTTTTVT. Position 73 is a phosphoserine (Ser73).

It belongs to the SPIRAL1 family. Ubiquitous. Preferentially expressed in above-ground organs.

Functionally, acts redundantly with SPR1 in maintaining the cortical microtubules organization essential for anisotropic cell growth. This is Protein SPIRAL1-like 3 (SP1L3) from Arabidopsis thaliana (Mouse-ear cress).